A 383-amino-acid polypeptide reads, in one-letter code: Ceramide synthase 3 (383 aa).

Residues 32–52 (VFVKPSHLYVTIPYAFLLLII) traverse the membrane as a helical segment. The homeobox-like stretch occupies residues 66-127 (KSFGIKETVR…RSRRNQERPS (62 aa)). The region spanning 130 to 331 (KKFQEACWRF…ILKMLNRCIF (202 aa)) is the TLC domain. 5 consecutive transmembrane segments (helical) span residues 139–159 (FAFY…KPWL), 174–194 (LLPS…SLLF), 205–225 (FLAH…SWCA), 264–284 (FFIF…FWIL), and 298–318 (FFSY…HLYW). The Cytoplasmic portion of the chain corresponds to 319 to 383 (GYYILKMLNR…HLIPNGQHGH (65 aa)). A Phosphoserine modification is found at S340. The segment covering 342–355 (DEDYEEEEEEEEEE) has biased composition (acidic residues). The interval 342-363 (DEDYEEEEEEEEEEATKGKEMD) is disordered.

As to expression, expressed in the epidermis, where it localizes at the interface between the stratum granulosum and the stratum corneum (at protein level).

The protein localises to the endoplasmic reticulum membrane. The catalysed reaction is a very long-chain fatty acyl-CoA + a sphingoid base = an N-(very-long-chain fatty acyl)-sphingoid base + CoA + H(+). It catalyses the reaction docosanoyl-CoA + sphinganine = N-docosanoylsphinganine + CoA + H(+). The enzyme catalyses tetracosanoyl-CoA + sphinganine = N-tetracosanoylsphinganine + CoA + H(+). It carries out the reaction hexacosanoyl-CoA + sphinganine = N-hexacosanoylsphinganine + CoA + H(+). The catalysed reaction is 2-hydroxydocosanoyl-CoA + sphinganine = N-(2-hydroxydocosanoyl)-sphinganine + CoA + H(+). It catalyses the reaction 2-hydroxytetracosanoyl-CoA + sphinganine = N-(2-hydroxytetracosanoyl)-sphinganine + CoA + H(+). The enzyme catalyses an ultra-long-chain fatty acyl-CoA + a sphingoid base = an N-(ultra-long-chain-acyl)-sphingoid base + CoA + H(+). It carries out the reaction octacosanoyl-CoA + sphinganine = N-(octacosanoyl)-sphinganine + CoA + H(+). The catalysed reaction is a fatty acyl-CoA + sphing-4-enine = an N-acylsphing-4-enine + CoA + H(+). It catalyses the reaction sphinganine + octadecanoyl-CoA = N-(octadecanoyl)-sphinganine + CoA + H(+). The enzyme catalyses 2-hydroxyoctadecanoyl-CoA + sphinganine = N-(2-hydroxyoctadecanoyl)-sphinganine + CoA + H(+). It participates in lipid metabolism; sphingolipid metabolism. Functionally, ceramide synthase that catalyzes the transfer of the acyl chain from acyl-CoA to a sphingoid base, with high selectivity toward very- and ultra-long-chain fatty acyl-CoA (chain length greater than C22). N-acylates sphinganine and sphingosine bases to form dihydroceramides and ceramides in de novo synthesis and salvage pathways, respectively. It is crucial for the synthesis of ultra-long-chain ceramides in the epidermis, to maintain epidermal lipid homeostasis and terminal differentiation. This Homo sapiens (Human) protein is Ceramide synthase 3.